A 334-amino-acid chain; its full sequence is Beta-hexosaminidase (334 aa).

Residues aspartate 60, arginine 68, arginine 133, and 163–164 (KH) contribute to the substrate site. Residue histidine 176 is the Proton donor/acceptor of the active site. Catalysis depends on aspartate 247, which acts as the Nucleophile.

Belongs to the glycosyl hydrolase 3 family. NagZ subfamily.

It localises to the cytoplasm. It carries out the reaction Hydrolysis of terminal non-reducing N-acetyl-D-hexosamine residues in N-acetyl-beta-D-hexosaminides.. It functions in the pathway cell wall biogenesis; peptidoglycan recycling. Functionally, plays a role in peptidoglycan recycling by cleaving the terminal beta-1,4-linked N-acetylglucosamine (GlcNAc) from peptide-linked peptidoglycan fragments, giving rise to free GlcNAc, anhydro-N-acetylmuramic acid and anhydro-N-acetylmuramic acid-linked peptides. The chain is Beta-hexosaminidase from Xanthomonas oryzae pv. oryzae (strain MAFF 311018).